The chain runs to 160 residues: Large ribosomal subunit protein uL22c (160 aa).

This sequence belongs to the universal ribosomal protein uL22 family. As to quaternary structure, part of the 50S ribosomal subunit.

It localises to the plastid. The protein resides in the chloroplast. In terms of biological role, this protein binds specifically to 23S rRNA. Its function is as follows. The globular domain of the protein is located near the polypeptide exit tunnel on the outside of the subunit, while an extended beta-hairpin is found that lines the wall of the exit tunnel in the center of the 70S ribosome. This is Large ribosomal subunit protein uL22c (rpl22) from Crucihimalaya wallichii (Rock-cress).